Here is a 442-residue protein sequence, read N- to C-terminus: MSSSNNQPNFAPFRDEKNNSLVVILGAQWGDEGKGKIVDLLASQADIVCRCQGGNNAGHTVVANGKTYHFHLLPSGIIQSNCTSVIGNGVVIHLPGLFAEIEAIEKNGVQDCWSKLKISDRAHLVFDFHQEADGLLELEKGDSKIGTTKKGIGPAYSTKASRVGLRVCDLMGDFEDFTKKFKNLVKGYRKRFSELEVDVEKELERYKRYADIIRPSIEDTVFFLSEELKKGNKNIIVEGANAVMLDLDFGTYPYVTSSSCGIGGVCTGLGLPPSTIRNVVGICKAYITRVGAGDFPTFLDSDIGTKLQDIGQEFGTTTGRRRRCGWLDIVVLDYVNRISGLTSIAVTKLDVMDTFEEVKIGTAYIHNGQKLKSFPADHSILSEVEVEYITMPGWKQNISLCRKFSDLPENAQAYILKIEELSGIPVQFVGVGKSRDATIRRF.

GTP-binding positions include 30 to 36 and 58 to 60; these read GDEGKGK and GHT. Asp-31 functions as the Proton acceptor in the catalytic mechanism. Mg(2+)-binding residues include Asp-31 and Gly-58. IMP contacts are provided by residues 31-34, 56-59, Thr-148, Arg-162, Asn-241, Thr-256, and Arg-320; these read DEGK and NAGH. Catalysis depends on His-59, which acts as the Proton donor. 316 to 322 provides a ligand contact to substrate; it reads TTTGRRR. GTP contacts are provided by residues Arg-322, 348–350, and 430–432; these read KLD and GVG.

This sequence belongs to the adenylosuccinate synthetase family. As to quaternary structure, homodimer. Requires Mg(2+) as cofactor.

The protein localises to the cytoplasm. It carries out the reaction IMP + L-aspartate + GTP = N(6)-(1,2-dicarboxyethyl)-AMP + GDP + phosphate + 2 H(+). Its pathway is purine metabolism; AMP biosynthesis via de novo pathway; AMP from IMP: step 1/2. Functionally, plays an important role in the de novo pathway and in the salvage pathway of purine nucleotide biosynthesis. Catalyzes the first committed step in the biosynthesis of AMP from IMP. The sequence is that of Adenylosuccinate synthetase from Trichoplax adhaerens (Trichoplax reptans).